Reading from the N-terminus, the 404-residue chain is Phosphopentomutase (404 aa).

6 residues coordinate Mn(2+): D10, D303, H308, D344, H345, and H356.

The protein belongs to the phosphopentomutase family. Mn(2+) serves as cofactor.

Its subcellular location is the cytoplasm. It catalyses the reaction 2-deoxy-alpha-D-ribose 1-phosphate = 2-deoxy-D-ribose 5-phosphate. It carries out the reaction alpha-D-ribose 1-phosphate = D-ribose 5-phosphate. The protein operates within carbohydrate degradation; 2-deoxy-D-ribose 1-phosphate degradation; D-glyceraldehyde 3-phosphate and acetaldehyde from 2-deoxy-alpha-D-ribose 1-phosphate: step 1/2. Its function is as follows. Isomerase that catalyzes the conversion of deoxy-ribose 1-phosphate (dRib-1-P) and ribose 1-phosphate (Rib-1-P) to deoxy-ribose 5-phosphate (dRib-5-P) and ribose 5-phosphate (Rib-5-P), respectively. In Shewanella oneidensis (strain ATCC 700550 / JCM 31522 / CIP 106686 / LMG 19005 / NCIMB 14063 / MR-1), this protein is Phosphopentomutase.